A 221-amino-acid polypeptide reads, in one-letter code: Lipoprotein-releasing system ATP-binding protein LolD (221 aa).

The ABC transporter domain maps to Leu-6 to Ile-220. Gly-42–Ser-49 contacts ATP.

This sequence belongs to the ABC transporter superfamily. Lipoprotein translocase (TC 3.A.1.125) family. In terms of assembly, the complex is composed of two ATP-binding proteins (LolD) and two transmembrane proteins (LolC and LolE).

The protein resides in the cell inner membrane. Functionally, part of the ABC transporter complex LolCDE involved in the translocation of mature outer membrane-directed lipoproteins, from the inner membrane to the periplasmic chaperone, LolA. Responsible for the formation of the LolA-lipoprotein complex in an ATP-dependent manner. The chain is Lipoprotein-releasing system ATP-binding protein LolD from Rickettsia felis (strain ATCC VR-1525 / URRWXCal2) (Rickettsia azadi).